The primary structure comprises 131 residues: D-ribose pyranase (131 aa).

His20 serves as the catalytic Proton donor. Residues Asp28, His98, and 120 to 122 (YAN) each bind substrate.

This sequence belongs to the RbsD / FucU family. RbsD subfamily. As to quaternary structure, homodecamer.

It localises to the cytoplasm. It carries out the reaction beta-D-ribopyranose = beta-D-ribofuranose. It functions in the pathway carbohydrate metabolism; D-ribose degradation; D-ribose 5-phosphate from beta-D-ribopyranose: step 1/2. In terms of biological role, catalyzes the interconversion of beta-pyran and beta-furan forms of D-ribose. In Laribacter hongkongensis (strain HLHK9), this protein is D-ribose pyranase.